The primary structure comprises 621 residues: MIQPLLVAICLVVFPYQGSSTILESGKVRDYEVVYPQKIPSLPKGRLQRREEKTKYENTMKYEFKVNGEPVVLNLEKNKRLFSKDYTETHYSPDGREITTSPPVQDHCYYHGHIQNDADSTAVIRACDGLNGYFKSNGEMYIIEPLKLSDSEAHAVFKYESLEKEDETPKTCGAIHNSGESDETIKKISNTFVTPEKGEEYLEAEKHIELYMVADNLVYRKYSSNITVVRMRIFEILNYVNLYYKILNIHVVLIGLEVWSDEDKILINGSSELTVRSFAAWRHSDLLKHKRNDNAQLLTGIHFDKRVLGIAFIGGMCNNFTSVGAIQDNSIHAVLIAATMTHELGHNLGMNHDTDSCTCNTGPCIMKAALNFKPPYEFSSCSYWDFQNYIMTKSAQCILNDPLTTDIVPTAICGNGFVEEGEECDCGPPEICKNECCEAATCKLKPEAQCASGACCEECQFRRAGELCRAAKDDCDLDELCTGQSAECPMNHFHMNGHPCQNNQGYCFRGTCPTLTKQCIALWGPDAEVAPDGCFMNNQKGNYYGYCKKKNGTNIPCEPENVKCGRLYCIDDSTEENSCKFHFSNENANSGMVQPGTKCGEGMVCGFGECIGLETALGINQ.

Residues 1–20 form the signal peptide; it reads MIQPLLVAICLVVFPYQGSS. Residues 21–188 constitute a propeptide that is removed on maturation; that stretch reads TILESGKVRD…GESDETIKKI (168 aa). The region spanning 206–402 is the Peptidase M12B domain; the sequence is KHIELYMVAD…KSAQCILNDP (197 aa). Asn-225, Asn-268, and Asn-319 each carry an N-linked (GlcNAc...) asparagine glycan. 17 disulfides stabilise this stretch: Cys-317/Cys-397, Cys-357/Cys-381, Cys-359/Cys-364, Cys-413/Cys-442, Cys-424/Cys-437, Cys-426/Cys-432, Cys-436/Cys-459, Cys-450/Cys-456, Cys-455/Cys-481, Cys-468/Cys-488, Cys-475/Cys-507, Cys-500/Cys-512, Cys-519/Cys-569, Cys-534/Cys-579, Cys-547/Cys-557, Cys-564/Cys-605, and Cys-599/Cys-610. His-342 provides a ligand contact to Zn(2+). Residue Glu-343 is part of the active site. 2 residues coordinate Zn(2+): His-346 and His-352. Positions 410-496 constitute a Disintegrin domain; that stretch reads TAICGNGFVE…ECPMNHFHMN (87 aa). The D/ECD-tripeptide signature appears at 474–476; that stretch reads DCD. Asn-551 is a glycosylation site (N-linked (GlcNAc...) asparagine).

Belongs to the venom metalloproteinase (M12B) family. P-III subfamily. P-IIIa sub-subfamily. In terms of assembly, monomer. Zn(2+) is required as a cofactor. Expressed by the venom gland.

The protein resides in the secreted. In terms of biological role, snake venom zinc metalloproteinase that inhibits platelet aggregation and degrades fibrinogen. This chain is Zinc metalloproteinase-disintegrin-like NaMP, found in Naja atra (Chinese cobra).